A 115-amino-acid chain; its full sequence is Ustilagic acid biosynthesis cluster protein orf3 (115 aa).

The N-terminal stretch at 1–38 is a signal peptide; that stretch reads MTYSKIACSLGKRGIARAPNQASSFFLLLFLFAKFSQQ. Positions 42-62 are disordered; sequence SPCLASSGVAKSRGPASTDRP.

It functions in the pathway secondary metabolite biosynthesis. Part of the gene cluster that mediates the biosynthesis of the glycolipid biosurfactant ustilagic acid (UA). UA is a secreted cellobiose glycolipid that is toxic for many microorganisms and confers biocontrol activity to U.maydis. UA consists of 15,16-dihydroxypalmitic or 2,15,16-trihydroxypalmitic acid, which is O-glycosidically linked to cellobiose at its terminal hydroxyl group. In addition, the cellobiose moiety is acetylated and acylated with a short-chain hydroxy fatty acid. UA biosynthesis starts with omega-hydroxylation of palmitic acid catalyzed by the cytochrome P450 monooxygenase cyp1. Terminal hydroxylation of palmitic acid precedes subterminal hydroxylation catalyzed by the cytochrome P450 monooxygenase cyp2. Sequential glucosylation of the hydroxy fatty acid is probably catalyzed by the glycosyltransferase ugt1. The cellobiose lipid is further decorated by acetylation of the proximal glucose residue and by acylation with a short-chain beta-hydroxy fatty acid at the distal glucose residue. The acyltransferase uat1 may be a good candidate for catalyzing either acetylation or acylation of the cellobiose lipid. The fatty acid synthase fas2 may be involved in synthesis of the carbon backbone of the short-chain beta-hydroxy fatty acid esterified to the cellobiose disaccharide. The secreted UA consists of a mixture of both alpha-hydroxylated and non-hydroxylated glycolipids; therefore, alpha-hydroxylation of the long-chain fatty, catalyzed by the fatty acid hydroxylase ahd1, occurs late in UA biosynthesis and may be the last step before secretion. This is Ustilagic acid biosynthesis cluster protein orf3 from Mycosarcoma maydis (Corn smut fungus).